The primary structure comprises 118 residues: DNA-binding protein Msp_0595 (118 aa).

Residues 15–44 (LKQQQLAAQQQQGASLEQMQQEEQARQQFE) are compositionally biased toward low complexity. Residues 15–45 (LKQQQLAAQQQQGASLEQMQQEEQARQQFEN) form a disordered region.

The protein belongs to the PDCD5 family.

This chain is DNA-binding protein Msp_0595, found in Methanosphaera stadtmanae (strain ATCC 43021 / DSM 3091 / JCM 11832 / MCB-3).